A 230-amino-acid polypeptide reads, in one-letter code: Small ribosomal subunit protein uS3 (230 aa).

In terms of domain architecture, KH type-2 spans 39–107 (VRNYLFKKLI…PVHINIEEIK (69 aa)).

The protein belongs to the universal ribosomal protein uS3 family. In terms of assembly, part of the 30S ribosomal subunit. Forms a tight complex with proteins S10 and S14.

Its function is as follows. Binds the lower part of the 30S subunit head. Binds mRNA in the 70S ribosome, positioning it for translation. The sequence is that of Small ribosomal subunit protein uS3 from Vesicomyosocius okutanii subsp. Calyptogena okutanii (strain HA).